The chain runs to 1101 residues: Protein unc-13 homolog (1101 aa).

In terms of domain architecture, MHD1 spans 663–804 (VSVFPAADSL…ASKDDLVPPV (142 aa)). One can recognise an MHD2 domain in the interval 941 to 1051 (QSRLEGLIEA…YETRELIDDL (111 aa)).

This sequence belongs to the unc-13 family. Expressed in roots, cotyledons, leaves, stems and flowers. Expressed in guard cells and mesophyll cells of leaves.

It localises to the cytoplasm. The protein resides in the cell membrane. Controls the tethering of the proton ATPase AHA1 to the plasma membrane. Is essential for stomatal opening in response to low concentration of carbon dioxide and light. In Arabidopsis thaliana (Mouse-ear cress), this protein is Protein unc-13 homolog.